Consider the following 231-residue polypeptide: MAKLTKRQRAINEKVDGSKQYSIDDAVALLKELSNVKFAETVDVSINLGIDPRKSDQSVRGATTLPHGNGKDVRVAVFTQGANAEAAKAAGAEFVGMDELAAEIKAGKMDFDVVIASPDAMRVVGQLGQVLGPRGLMPNPKTGTVTPDVVTAVKNAKAGQVRYRAEKGGIIHGGIGKISFETVALKENLEALISDLKKAKPASSKGVYLKKVTLSTTMGPGLVIDQSSLAV.

The protein belongs to the universal ribosomal protein uL1 family. In terms of assembly, part of the 50S ribosomal subunit.

In terms of biological role, binds directly to 23S rRNA. The L1 stalk is quite mobile in the ribosome, and is involved in E site tRNA release. Functionally, protein L1 is also a translational repressor protein, it controls the translation of the L11 operon by binding to its mRNA. The protein is Large ribosomal subunit protein uL1 of Cellvibrio japonicus (strain Ueda107) (Pseudomonas fluorescens subsp. cellulosa).